Reading from the N-terminus, the 679-residue chain is Protein polyglycylase TTLL10 (679 aa).

Positions 1-15 (MPLHPPARRPHGHRR) are enriched in basic residues. 3 disordered regions span residues 1-33 (MPLH…GRLS), 49-77 (GHRA…LMPA), and 96-124 (VSFK…RMGS). Residues 18–30 (SEAQTEATTQDTG) show a composition bias toward polar residues. Residues 96–110 (VSFKRPKRSRTHQSH) are compositionally biased toward basic residues. The 372-residue stretch at 172-543 (QGPFFYIGGT…TCQKSLHSQK (372 aa)) folds into the TTL domain. ATP is bound by residues Lys-304, 310–311 (QG), 353–356 (QRYV), 366–368 (KFD), and 409–410 (TN). A protein is bound at residue Gln-310. Residues Asp-489, Glu-502, and Asn-504 each coordinate Mg(2+). Residues 605 to 679 (DRPAARKSMS…EQRSTSHRGS (75 aa)) are disordered.

It depends on Mg(2+) as a cofactor.

It is found in the cytoplasm. The protein resides in the cytoskeleton. It localises to the cell projection. Its subcellular location is the cilium. The protein localises to the cilium axoneme. It carries out the reaction (glycyl)(n)-glycyl-L-glutamyl-[protein] + glycine + ATP = (glycyl)(n+1)-glycyl-L-glutamyl-[protein] + ADP + phosphate + H(+). Functionally, polyglycylase which modifies both tubulin and non-tubulin proteins, generating polyglycine side chains of variable lengths on the gamma-carboxyl groups of specific glutamate residues of target proteins. Involved in the elongation step rather than the initiation step of the polyglycylation reaction. Polyglycylates alpha-tubulin and beta-tubulin. Polyglycylates non-tubulin proteins such as nucleosome assembly protein NAP1. The chain is Protein polyglycylase TTLL10 from Rattus norvegicus (Rat).